Consider the following 202-residue polypeptide: Na(+)-translocating NADH-quinone reductase subunit E (202 aa).

6 helical membrane-spanning segments follow: residues 11–31 (SVFI…FIAI), 35–55 (VETA…TVPA), 81–101 (FLGF…LEML), 114–134 (GIYL…LFMV), 144–164 (VVYG…LAGI), and 180–200 (LGIA…FSGI).

The protein belongs to the NqrDE/RnfAE family. Composed of six subunits; NqrA, NqrB, NqrC, NqrD, NqrE and NqrF.

It is found in the cell inner membrane. It carries out the reaction a ubiquinone + n Na(+)(in) + NADH + H(+) = a ubiquinol + n Na(+)(out) + NAD(+). NQR complex catalyzes the reduction of ubiquinone-1 to ubiquinol by two successive reactions, coupled with the transport of Na(+) ions from the cytoplasm to the periplasm. NqrA to NqrE are probably involved in the second step, the conversion of ubisemiquinone to ubiquinol. In Azotobacter vinelandii (strain DJ / ATCC BAA-1303), this protein is Na(+)-translocating NADH-quinone reductase subunit E.